The chain runs to 255 residues: Putative keratin-87 protein (255 aa).

The region spanning 1-255 is the IF rod domain; it reads MEANSGRLAS…SRGCVRALVL (255 aa). Coiled-coil stretches lie at residues 19 to 81 and 147 to 227; these read LEGY…EIRV and LRRT…VMNS.

The protein belongs to the intermediate filament family. As to quaternary structure, heterotetramer of two type I and two type II keratins.

This is Putative keratin-87 protein (KRT87P) from Homo sapiens (Human).